Reading from the N-terminus, the 412-residue chain is Alanyl-tRNA editing protein Aarsd1 (412 aa).

H109 and H113 together coordinate Zn(2+). S174 is modified (phosphoserine). Zn(2+) contacts are provided by C209 and H213.

This sequence belongs to the class-II aminoacyl-tRNA synthetase family. Alax-L subfamily. Zn(2+) is required as a cofactor.

It localises to the cytoplasm. Functions in trans to edit the amino acid moiety from incorrectly charged tRNA(Ala). In Rattus norvegicus (Rat), this protein is Alanyl-tRNA editing protein Aarsd1 (Aarsd1).